Here is a 906-residue protein sequence, read N- to C-terminus: Coatomer subunit beta' (906 aa).

WD repeat units lie at residues A13–T52, V55–M94, A97–Q136, G140–T180, G183–T224, G227–T266, S350–F388, and S390–K425. K627 carries the post-translational modification N6-acetyllysine. The WD 9 repeat unit spans residues I746–K783. The interval E837 to P862 is disordered. Residue S859 is modified to Phosphoserine. A Phosphothreonine modification is found at T861. Positions A866–E890 form a coiled coil.

This sequence belongs to the WD repeat COPB2 family. Oligomeric complex that consists of at least the alpha, beta, beta', gamma, delta, epsilon and zeta subunits. Probably interacts with PEX11A. Interacts with SCYL1. Interacts with JAGN1.

The protein localises to the cytoplasm. It localises to the cytosol. It is found in the golgi apparatus membrane. The protein resides in the cytoplasmic vesicle. Its subcellular location is the COPI-coated vesicle membrane. The coatomer is a cytosolic protein complex that binds to dilysine motifs and reversibly associates with Golgi non-clathrin-coated vesicles, which further mediate biosynthetic protein transport from the ER, via the Golgi up to the trans Golgi network. Coatomer complex is required for budding from Golgi membranes, and is essential for the retrograde Golgi-to-ER transport of dilysine-tagged proteins. In mammals, the coatomer can only be recruited by membranes associated to ADP-ribosylation factors (ARFs), which are small GTP-binding proteins; the complex also influences the Golgi structural integrity, as well as the processing, activity, and endocytic recycling of LDL receptors. Its function is as follows. This coatomer complex protein, essential for Golgi budding and vesicular trafficking, is a selective binding protein (RACK) for protein kinase C, epsilon type. It binds to Golgi membranes in a GTP-dependent manner. The chain is Coatomer subunit beta' (COPB2) from Macaca fascicularis (Crab-eating macaque).